Reading from the N-terminus, the 117-residue chain is Hydrogenase maturation factor HypA (117 aa).

Position 2 (H2) interacts with Ni(2+). Zn(2+) contacts are provided by C74, C77, C91, and C94.

This sequence belongs to the HypA/HybF family.

Functionally, involved in the maturation of [NiFe] hydrogenases. Required for nickel insertion into the metal center of the hydrogenase. In Helicobacter pylori (strain J99 / ATCC 700824) (Campylobacter pylori J99), this protein is Hydrogenase maturation factor HypA.